Consider the following 210-residue polypeptide: Cytochrome c oxidase subunit 2 (210 aa).

Topologically, residues 1–20 are mitochondrial intermembrane; the sequence is MAFILSFWMIFLLDSVIVLL. A helical transmembrane segment spans residues 21–42; the sequence is SFVCFVCVWICALLFSTVLLVS. At 43-60 the chain is on the mitochondrial matrix side; it reads KLNNIYCTWDFTASKFID. Residues 61-86 form a helical membrane-spanning segment; sequence VYWFTIGGMFSLGLLLRLCLLLYFGH. At 87-210 the chain is on the mitochondrial intermembrane side; the sequence is LNFVSFDLCK…GFMPIVICFI (124 aa). Residues H157, C192, E194, C196, H200, and M203 each coordinate Cu cation. E194 provides a ligand contact to Mg(2+).

This sequence belongs to the cytochrome c oxidase subunit 2 family. In terms of assembly, component of the cytochrome c oxidase (complex IV, CIV), a multisubunit enzyme composed of a catalytic core of 3 subunits and several supernumerary subunits. The complex exists as a monomer or a dimer and forms supercomplexes (SCs) in the inner mitochondrial membrane with ubiquinol-cytochrome c oxidoreductase (cytochrome b-c1 complex, complex III, CIII). Cu cation serves as cofactor.

Its subcellular location is the mitochondrion inner membrane. It catalyses the reaction 4 Fe(II)-[cytochrome c] + O2 + 8 H(+)(in) = 4 Fe(III)-[cytochrome c] + 2 H2O + 4 H(+)(out). Its function is as follows. Component of the cytochrome c oxidase, the last enzyme in the mitochondrial electron transport chain which drives oxidative phosphorylation. The respiratory chain contains 3 multisubunit complexes succinate dehydrogenase (complex II, CII), ubiquinol-cytochrome c oxidoreductase (cytochrome b-c1 complex, complex III, CIII) and cytochrome c oxidase (complex IV, CIV), that cooperate to transfer electrons derived from NADH and succinate to molecular oxygen, creating an electrochemical gradient over the inner membrane that drives transmembrane transport and the ATP synthase. Cytochrome c oxidase is the component of the respiratory chain that catalyzes the reduction of oxygen to water. Electrons originating from reduced cytochrome c in the intermembrane space (IMS) are transferred via the dinuclear copper A center (CU(A)) of subunit 2 and heme A of subunit 1 to the active site in subunit 1, a binuclear center (BNC) formed by heme A3 and copper B (CU(B)). The BNC reduces molecular oxygen to 2 water molecules using 4 electrons from cytochrome c in the IMS and 4 protons from the mitochondrial matrix. This Leishmania tarentolae (Sauroleishmania tarentolae) protein is Cytochrome c oxidase subunit 2.